The following is a 169-amino-acid chain: S-ribosylhomocysteine lyase (169 aa).

3 residues coordinate Fe cation: histidine 54, histidine 58, and cysteine 128.

Belongs to the LuxS family. In terms of assembly, homodimer. Fe cation serves as cofactor.

It carries out the reaction S-(5-deoxy-D-ribos-5-yl)-L-homocysteine = (S)-4,5-dihydroxypentane-2,3-dione + L-homocysteine. Involved in the synthesis of autoinducer 2 (AI-2) which is secreted by bacteria and is used to communicate both the cell density and the metabolic potential of the environment. The regulation of gene expression in response to changes in cell density is called quorum sensing. Catalyzes the transformation of S-ribosylhomocysteine (RHC) to homocysteine (HC) and 4,5-dihydroxy-2,3-pentadione (DPD). In Aeromonas hydrophila subsp. hydrophila (strain ATCC 7966 / DSM 30187 / BCRC 13018 / CCUG 14551 / JCM 1027 / KCTC 2358 / NCIMB 9240 / NCTC 8049), this protein is S-ribosylhomocysteine lyase.